The chain runs to 142 residues: Large ribosomal subunit protein uL13 (142 aa).

The protein belongs to the universal ribosomal protein uL13 family. As to quaternary structure, part of the 50S ribosomal subunit.

In terms of biological role, this protein is one of the early assembly proteins of the 50S ribosomal subunit, although it is not seen to bind rRNA by itself. It is important during the early stages of 50S assembly. This chain is Large ribosomal subunit protein uL13, found in Pelobacter propionicus (strain DSM 2379 / NBRC 103807 / OttBd1).